The primary structure comprises 84 residues: Putative defensin-like protein 63 (84 aa).

Positions 1 to 21 (MDIRKTYVIIFFVGILTISFS) are cleaved as a signal peptide. Intrachain disulfides connect Cys-40-Cys-81, Cys-44-Cys-67, Cys-53-Cys-79, and Cys-57-Cys-80.

Belongs to the DEFL family.

It is found in the secreted. This Arabidopsis thaliana (Mouse-ear cress) protein is Putative defensin-like protein 63.